The primary structure comprises 45 residues: Bomanin Short 1 (45 aa).

The first 20 residues, 1 to 20, serve as a signal peptide directing secretion; it reads MKFFSVVTVFVLGLLAVANA. A propeptide spans 21-27 (removed by a dipeptidylpeptidase); sequence VPLSPDP. Cys-36 and Cys-39 are disulfide-bonded. Gly-43 bears the Glycine amide mark.

Hemolymph (at protein level).

It is found in the secreted. In terms of biological role, secreted immune-induced peptide induced by Toll signaling. Has a role in resistance to bacterial and fungal infections. Has no activity against the fungus C.glabrata in vitro. In Drosophila melanogaster (Fruit fly), this protein is Bomanin Short 1.